Consider the following 321-residue polypeptide: Probable 2-oxoglutarate-dependent dioxygenase AOP1.2 (321 aa).

Positions 165 to 270 (TYYLTRLMKY…RYSTGLFSIP (106 aa)) constitute a Fe2OG dioxygenase domain. Positions 194, 196, and 251 each coordinate Fe cation. Position 261 (Arg-261) interacts with 2-oxoglutarate.

Belongs to the iron/ascorbate-dependent oxidoreductase family. Requires Fe(2+) as cofactor.

Functionally, probable 2-oxoglutarate-dependent dioxygenase that may be involved in glucosinolates biosynthesis. May play a role in the production of aliphatic glucosinolates. The sequence is that of Probable 2-oxoglutarate-dependent dioxygenase AOP1.2 (AOP1.2) from Arabidopsis thaliana (Mouse-ear cress).